Here is a 422-residue protein sequence, read N- to C-terminus: Ornithine decarboxylase (422 aa).

N6-(pyridoxal phosphate)lysine is present on Lys-71. Pyridoxal 5'-phosphate contacts are provided by residues Ser-203, Gly-240, and 275–278 (EPGR). 331 to 332 (FD) is a substrate binding site. Residue Cys-359 is the Proton donor; shared with dimeric partner of the active site. Asp-360 provides a ligand contact to substrate. Tyr-388 contacts pyridoxal 5'-phosphate.

Belongs to the Orn/Lys/Arg decarboxylase class-II family. As to quaternary structure, homodimer. Only the dimer is catalytically active, as the active sites are constructed of residues from both monomers. Requires pyridoxal 5'-phosphate as cofactor.

The catalysed reaction is L-ornithine + H(+) = putrescine + CO2. Its pathway is amine and polyamine biosynthesis; putrescine biosynthesis via L-ornithine pathway; putrescine from L-ornithine: step 1/1. Inhibited by antizyme (AZ) in response to polyamine levels. AZ inhibits the assembly of the functional homodimer by binding to ODC monomers and targeting them for ubiquitin-independent proteolytic destruction by the 26S proteasome. Functionally, catalyzes the first and rate-limiting step of polyamine biosynthesis that converts ornithine into putrescine, which is the precursor for the polyamines, spermidine and spermine. Polyamines are essential for cell proliferation and are implicated in cellular processes, ranging from DNA replication to apoptosis. The sequence is that of Ornithine decarboxylase from Caenorhabditis elegans.